The following is a 278-amino-acid chain: Large ribosomal subunit protein uL2 (278 aa).

Disordered stretches follow at residues 1-58 and 225-278; these read MAIR…GGGH and VMNP…KNKR. The segment covering 37-58 has biased composition (basic residues); it reads LHGRGGRNAHGRITTRHKGGGH. The span at 253-267 shows a compositional bias: basic and acidic residues; it reads PEGRTRKNKASDKLI. The segment covering 268–278 has biased composition (basic residues); the sequence is VRRRRTGKNKR.

Belongs to the universal ribosomal protein uL2 family. As to quaternary structure, part of the 50S ribosomal subunit. Forms a bridge to the 30S subunit in the 70S ribosome.

One of the primary rRNA binding proteins. Required for association of the 30S and 50S subunits to form the 70S ribosome, for tRNA binding and peptide bond formation. It has been suggested to have peptidyltransferase activity; this is somewhat controversial. Makes several contacts with the 16S rRNA in the 70S ribosome. The chain is Large ribosomal subunit protein uL2 from Rhodococcus opacus (strain B4).